The chain runs to 229 residues: Urease accessory protein UreF (229 aa).

It belongs to the UreF family. In terms of assembly, ureD, UreF and UreG form a complex that acts as a GTP-hydrolysis-dependent molecular chaperone, activating the urease apoprotein by helping to assemble the nickel containing metallocenter of UreC. The UreE protein probably delivers the nickel.

It localises to the cytoplasm. Its function is as follows. Required for maturation of urease via the functional incorporation of the urease nickel metallocenter. The protein is Urease accessory protein UreF of Ralstonia pickettii (strain 12J).